The following is a 209-amino-acid chain: Large ribosomal subunit protein uL3 (209 aa).

The protein belongs to the universal ribosomal protein uL3 family. Part of the 50S ribosomal subunit. Forms a cluster with proteins L14 and L19.

One of the primary rRNA binding proteins, it binds directly near the 3'-end of the 23S rRNA, where it nucleates assembly of the 50S subunit. This chain is Large ribosomal subunit protein uL3, found in Carboxydothermus hydrogenoformans (strain ATCC BAA-161 / DSM 6008 / Z-2901).